The following is a 37-amino-acid chain: Large ribosomal subunit protein bL36 (37 aa).

Belongs to the bacterial ribosomal protein bL36 family.

This is Large ribosomal subunit protein bL36 from Halothermothrix orenii (strain H 168 / OCM 544 / DSM 9562).